We begin with the raw amino-acid sequence, 169 residues long: Menaquinol:cytochrome c reductase iron-sulfur subunit (169 aa).

The Rieske domain occupies Glu62–Leu160. Residues Cys102, His104, Cys123, and His126 each coordinate [2Fe-2S] cluster. Cys107 and Cys125 are joined by a disulfide.

Belongs to the Rieske iron-sulfur protein family. In terms of assembly, the main subunits of the menaquinol:cytochrome c complex are a Rieske-type iron-sulfur protein (QcrA), a cytochrome b (QcrB) and a cytochrome c (QcrC). It depends on [2Fe-2S] cluster as a cofactor.

In terms of biological role, component of the menaquinol:cytochrome c reductase complex. The Rieske protein is a high potential 2Fe-2S protein. This Geobacillus thermodenitrificans protein is Menaquinol:cytochrome c reductase iron-sulfur subunit (qcrA).